The following is a 600-amino-acid chain: Elongation factor 4 (600 aa).

The region spanning 5 to 187 is the tr-type G domain; that stretch reads SRIRNFSIIA…AIVTRLPPPK (183 aa). GTP-binding positions include 17-22 and 134-137; these read DHGKST and NKID.

Belongs to the TRAFAC class translation factor GTPase superfamily. Classic translation factor GTPase family. LepA subfamily.

It localises to the cell inner membrane. It carries out the reaction GTP + H2O = GDP + phosphate + H(+). In terms of biological role, required for accurate and efficient protein synthesis under certain stress conditions. May act as a fidelity factor of the translation reaction, by catalyzing a one-codon backward translocation of tRNAs on improperly translocated ribosomes. Back-translocation proceeds from a post-translocation (POST) complex to a pre-translocation (PRE) complex, thus giving elongation factor G a second chance to translocate the tRNAs correctly. Binds to ribosomes in a GTP-dependent manner. The chain is Elongation factor 4 from Rhodospirillum centenum (strain ATCC 51521 / SW).